A 184-amino-acid chain; its full sequence is MNIKSEFFRVDFIIGARRLSNYFWATVVFLGSLGFFIVGVSSYLQKNIVFFLSASDILFTPQGIVMCFYGIAGLFLSFYLWFTIFLDIGSGYNEFDKKKGIISIFRWGYPGQNRRIKLSFPIKDVQAIKLEVKEVLPARRMIYIKIKGQQDIPLNRIAENITLREMEDKAADLARFLKVSIEGL.

The next 2 helical transmembrane spans lie at 21–43 and 63–85; these read NYFWATVVFLGSLGFFIVGVSSY and GIVMCFYGIAGLFLSFYLWFTIF.

Belongs to the Ycf4 family.

It is found in the plastid. It localises to the chloroplast thylakoid membrane. Seems to be required for the assembly of the photosystem I complex. This Chaetosphaeridium globosum (Charophycean green alga) protein is Photosystem I assembly protein Ycf4.